The chain runs to 145 residues: 3-hydroxyacyl-[acyl-carrier-protein] dehydratase FabZ (145 aa).

Residue His47 is part of the active site.

Belongs to the thioester dehydratase family. FabZ subfamily.

It localises to the cytoplasm. The enzyme catalyses a (3R)-hydroxyacyl-[ACP] = a (2E)-enoyl-[ACP] + H2O. In terms of biological role, involved in unsaturated fatty acids biosynthesis. Catalyzes the dehydration of short chain beta-hydroxyacyl-ACPs and long chain saturated and unsaturated beta-hydroxyacyl-ACPs. In Polaromonas sp. (strain JS666 / ATCC BAA-500), this protein is 3-hydroxyacyl-[acyl-carrier-protein] dehydratase FabZ.